We begin with the raw amino-acid sequence, 404 residues long: Type I restriction enzyme EcoR124I/EcoR124II specificity subunit (404 aa).

The tract at residues 1–153 (MSEMSYLEKL…PIPCPDNPEK (153 aa)) is target-recognition domain 1. The tract at residues 154 to 199 (SLAIQSEIVRILDKFTALTAELTAELNMRKKQYNYYRDQLLSFKEG) is conserved region 1. The tract at residues 200-349 (EVEWKTLGEI…KLFSFKIPVP (150 aa)) is target-recognition domain 2. The segment at 350 to 404 (NINEQQRIVEILDKFDTLTNSITEGLPREIELRQKQYEYYRDLLFSFPKPETVSN) is conserved region 2.

It belongs to the type-I restriction system S methylase family. The type I restriction/modification system is composed of three polypeptides R, M and S; the restriction enzyme has stoichiometry R(2)M(2)S(1) while the methyltransferase is M(2)S(1). There is an equilibrium between R(2)M(2)S(1) and R(1)M(2)S(1); the latter is methylation and translocation proficient but restriction deficient. As to quaternary structure, (Microbial infection) Holoenenzyme interacts with Escherichia phage T7 protein Ocr; this interaction leads to the inhibition of the restriction activity, but may still allow methylation and translocation.

Functionally, the specificity (S) subunit of a type I restriction enzyme; this subunit dictates DNA sequence specificity. The presence or absence of a 4-residue repeat changes the sequence specificity; a third copy of TAEL inserted at position 179-180 changes the recognition site from 5'-GAAN(6)RTCG-3' (for EcoR124I) to 5'-GAAN(7)RTCG-3' (for EcoR124II). The M and S subunits together form a methyltransferase (MTase) that methylates A-3 on the top and bottom strand of the sequence 5'-GAAN(7)RTCG-3'. In the presence of the R subunit the complex can also act as an endonuclease, binding to the same target sequence but cutting the DNA some distance from this site. Whether the DNA is cut or modified depends on the methylation state of the target sequence. When the target site is unmodified, the DNA is cut. When the target site is hemimethylated, the complex acts as a maintenance MTase modifying the DNA so that both strands become methylated. After locating a non-methylated recognition site, the enzyme complex serves as a molecular motor that translocates DNA in an ATP-dependent manner until a collision occurs that triggers cleavage. The R(1)M(2)S(1) complex translocates an average of 555 bp/second on nicked DNA; the R(2)M(2)S(1) complex translocates at double that speed. The 2 R subunit motors are independent and track along the helical pitch of the DNA, inducing positive supercoiling ahead of themselves. The chain is Type I restriction enzyme EcoR124I/EcoR124II specificity subunit (hsdS) from Escherichia coli.